A 349-amino-acid polypeptide reads, in one-letter code: MIEFDNLTYLHGKPQGTGLLKANPEDFVVVEDLGFEPDGEGEHILVRILKNGCNTRFVADALAKFLKIHAREVSFAGQKDKHAVTEQWLCARVPGKEMPDLSAFQLEGCQVLEYARHKRKLRLGALKGNAFTLVLREVSNRDDVEQRLNDICVKGVPNYFGAQRFGIGGSNLQGAQRWAQTNTPVRDRNKRSFWLSAARSALFNQIVAERLKKADVNQVVDGDALQLAGRGSWFVATTEELAELQRRVNDKELMITAALPGSGEWGTQREALAFEQAAVAAETELQALLVREKVEAARRAMLLYPQQLSWNWWDDVTVEIRFWLPAGSFATSVVRELINTTGDYAHIAE.

Position 27 (Phe-27) interacts with substrate. The Nucleophile role is filled by Asp-80. Position 129 (Asn-129) interacts with substrate. In terms of domain architecture, TRUD spans Gly-155 to Leu-303. Phe-329 is a binding site for substrate.

It belongs to the pseudouridine synthase TruD family.

The catalysed reaction is uridine(13) in tRNA = pseudouridine(13) in tRNA. In terms of biological role, responsible for synthesis of pseudouridine from uracil-13 in transfer RNAs. The protein is tRNA pseudouridine synthase D of Escherichia coli O9:H4 (strain HS).